The primary structure comprises 1889 residues: Treslin (1889 aa).

9 positions are modified to phosphoserine: Ser295, Ser599, Ser820, Ser861, Ser919, Ser934, Ser1002, Ser1027, and Ser1078. Residues 812-832 are compositionally biased toward low complexity; the sequence is DSMSQESMSPPPSSSTHRSVS. The interval 812 to 836 is disordered; it reads DSMSQESMSPPPSSSTHRSVSAITE. The interval 979–1063 is disordered; the sequence is RLLHRQIKGR…RENFPVQSIQ (85 aa). Over residues 1020–1050 the composition is skewed to polar residues; that stretch reads LSFSRTNSGSFYSVSQPKSRSVQRIHSSQQE. Disordered regions lie at residues 1098–1421, 1471–1508, 1520–1543, 1630–1714, 1730–1751, and 1841–1875; these read EIST…SQFS, LPGE…SSSE, GKQR…SPQT, SCTP…SLEQ, VCQL…ETSW, and QGRT…TLSR. The span at 1127 to 1179 shows a compositional bias: polar residues; it reads TAQTLLYTPERLQNSPTEMTSAEGTISEATIKTPSSHGYNSPFASKVTSQKTV. A Phosphothreonine modification is found at Thr1134. The residue at position 1141 (Ser1141) is a Phosphoserine. A compositionally biased stretch (low complexity) spans 1187–1197; the sequence is SPPLTKLPSTP. Residues 1203–1219 are compositionally biased toward polar residues; the sequence is QPPQCSSDCTWPHSVNS. A compositionally biased stretch (low complexity) spans 1339 to 1351; it reads TSPSVTSSVSCPV. Positions 1373-1382 are enriched in basic residues; sequence KLRRSCRKKS. Ser1406 bears the Phosphoserine mark. Low complexity predominate over residues 1496 to 1508; it reads LVPAPSSVSSSSE. Composition is skewed to polar residues over residues 1525-1543 and 1652-1662; these read DAAQ…SPQT and WTPSPKQSGKT. The segment covering 1705 to 1714 has biased composition (basic and acidic residues); it reads PEGKERSLEQ.

Belongs to the treslin family. Interacts with TOPBP1 (via BRCT domains); interaction takes place in a CDK2-dependent manner. Component of the replisome complex composed of at least DONSON, MCM2, MCM7, PCNA and TICRR.

The protein localises to the nucleus. Its function is as follows. Regulator of DNA replication and S/M and G2/M checkpoints. Regulates the triggering of DNA replication initiation via its interaction with TOPBP1 by participating in CDK2-mediated loading of CDC45L onto replication origins. Required for the transition from pre-replication complex (pre-RC) to pre-initiation complex (pre-IC). Required to prevent mitotic entry after treatment with ionizing radiation. This chain is Treslin (Ticrr), found in Mus musculus (Mouse).